The sequence spans 411 residues: Putative competence-damage inducible protein (411 aa).

It belongs to the CinA family.

This is Putative competence-damage inducible protein from Caldicellulosiruptor saccharolyticus (strain ATCC 43494 / DSM 8903 / Tp8T 6331).